We begin with the raw amino-acid sequence, 310 residues long: Methionyl-tRNA formyltransferase (310 aa).

Serine 109 to proline 112 contacts (6S)-5,6,7,8-tetrahydrofolate.

The protein belongs to the Fmt family.

The catalysed reaction is L-methionyl-tRNA(fMet) + (6R)-10-formyltetrahydrofolate = N-formyl-L-methionyl-tRNA(fMet) + (6S)-5,6,7,8-tetrahydrofolate + H(+). Its function is as follows. Attaches a formyl group to the free amino group of methionyl-tRNA(fMet). The formyl group appears to play a dual role in the initiator identity of N-formylmethionyl-tRNA by promoting its recognition by IF2 and preventing the misappropriation of this tRNA by the elongation apparatus. This Macrococcus caseolyticus (strain JCSC5402) (Macrococcoides caseolyticum) protein is Methionyl-tRNA formyltransferase.